A 123-amino-acid chain; its full sequence is Small ribosomal subunit protein uS13c (123 aa).

A disordered region spans residues 90-123 (GKRHRNNLPVRGQRTRTNARSRRGSKKTVTGKKK). Residues 102-123 (QRTRTNARSRRGSKKTVTGKKK) are compositionally biased toward basic residues.

This sequence belongs to the universal ribosomal protein uS13 family. Part of the 30S ribosomal subunit.

It is found in the plastid. The protein resides in the chloroplast. Located at the top of the head of the 30S subunit, it contacts several helices of the 16S rRNA. The polypeptide is Small ribosomal subunit protein uS13c (Trieres chinensis (Marine centric diatom)).